Reading from the N-terminus, the 357-residue chain is Arginine kinase Met e 2 (357 aa).

In terms of domain architecture, Phosphagen kinase N-terminal spans 9–91; it reads KLEAGFKKLE…FDPIIEDYHV (83 aa). 64-68 is a binding site for L-arginine; the sequence is GVGIY. One can recognise a Phosphagen kinase C-terminal domain in the interval 119–356; that stretch reads FVISTRVRCG…LELIKIEKEM (238 aa). Residues 122-126 and His185 each bind ATP; that span reads STRVR. Glu225 is an L-arginine binding site. Arg229 lines the ATP pocket. Cys271 is a binding site for L-arginine. ATP contacts are provided by residues 280–284 and 309–314; these read RASVH and RGTRGE. Glu314 serves as a coordination point for L-arginine.

This sequence belongs to the ATP:guanido phosphotransferase family.

It carries out the reaction L-arginine + ATP = N(omega)-phospho-L-arginine + ADP + H(+). In terms of biological role, catalyzes the reversible transfer of high energy ATP gamma-phosphate group to L-arginine. This is Arginine kinase Met e 2 from Metapenaeus ensis (Greasyback shrimp).